Reading from the N-terminus, the 639-residue chain is Threonine--tRNA ligase (639 aa).

One can recognise a TGS domain in the interval 1-61 (MIHITLPDGS…TADCRLSIIT (61 aa)). Positions 242–533 (DHRKLGRELD…LLEQHAGALP (292 aa)) are catalytic. 3 residues coordinate Zn(2+): Cys-333, His-384, and His-510.

The protein belongs to the class-II aminoacyl-tRNA synthetase family. Homodimer. The cofactor is Zn(2+).

The protein resides in the cytoplasm. The catalysed reaction is tRNA(Thr) + L-threonine + ATP = L-threonyl-tRNA(Thr) + AMP + diphosphate + H(+). Catalyzes the attachment of threonine to tRNA(Thr) in a two-step reaction: L-threonine is first activated by ATP to form Thr-AMP and then transferred to the acceptor end of tRNA(Thr). Also edits incorrectly charged L-seryl-tRNA(Thr). This Verminephrobacter eiseniae (strain EF01-2) protein is Threonine--tRNA ligase.